The sequence spans 230 residues: DNA mismatch repair protein MutH (230 aa).

This sequence belongs to the MutH family.

Its subcellular location is the cytoplasm. In terms of biological role, sequence-specific endonuclease that cleaves unmethylated GATC sequences. It is involved in DNA mismatch repair. The chain is DNA mismatch repair protein MutH from Enterobacter sp. (strain 638).